We begin with the raw amino-acid sequence, 214 residues long: tRNA (guanine-N(7)-)-methyltransferase (214 aa).

4 residues coordinate S-adenosyl-L-methionine: Asp35, Glu60, Asn87, and Asp113. Asp113 is an active-site residue. Residues Lys117 and Asp149 each contribute to the substrate site.

It belongs to the class I-like SAM-binding methyltransferase superfamily. TrmB family.

The catalysed reaction is guanosine(46) in tRNA + S-adenosyl-L-methionine = N(7)-methylguanosine(46) in tRNA + S-adenosyl-L-homocysteine. The protein operates within tRNA modification; N(7)-methylguanine-tRNA biosynthesis. In terms of biological role, catalyzes the formation of N(7)-methylguanine at position 46 (m7G46) in tRNA. In Prochlorococcus marinus (strain NATL1A), this protein is tRNA (guanine-N(7)-)-methyltransferase.